Consider the following 401-residue polypeptide: Mannonate dehydratase (401 aa).

This sequence belongs to the mannonate dehydratase family. Requires Fe(2+) as cofactor. Mn(2+) is required as a cofactor.

It carries out the reaction D-mannonate = 2-dehydro-3-deoxy-D-gluconate + H2O. The protein operates within carbohydrate metabolism; pentose and glucuronate interconversion. Functionally, catalyzes the dehydration of D-mannonate. The protein is Mannonate dehydratase of Brucella melitensis biotype 2 (strain ATCC 23457).